A 151-amino-acid polypeptide reads, in one-letter code: IFN signaling evasion protein OPG029 (151 aa).

This sequence belongs to the orthopoxvirus OPG029 family. Interacts with host TANK, TBKBP1 and AZI2; these interactions prevent interferon production. Interacts with host STAT2.

In terms of biological role, prevents establishment of cellular antiviral state by blocking virus-induced phosphorylation and activation of interferon regulatory factors 3/IRF3 and 7/IRF7, transcription factors critical for the induction of interferons alpha and beta. This blockage is produced through the inhibition of host TBK1, by binding host TBK1 adapter proteins TBKBP1 and AZI2, thereby producing a strong inhibition of the phosphorylation and activation of IRF3 and IRF7. Also acts as an inhibitor of the cellular response to type I IFN by interacting with host STAT2. Mechanistically, exerts its inhibitory effect after host ISGF3 complex (composed of STAT1, STAT2 and IRF9) binding to the interferon stimulated response element (ISRE). The sequence is that of IFN signaling evasion protein OPG029 (OPG029) from Vaccinia virus (strain Western Reserve) (VACV).